Reading from the N-terminus, the 274-residue chain is Large ribosomal subunit protein uL2cz/uL2cy (274 aa).

Disordered stretches follow at residues 1 to 22 (MAIHLYKTSTPSTRNGAVDSQV) and 225 to 274 (PVDH…RRSK).

This sequence belongs to the universal ribosomal protein uL2 family. As to quaternary structure, part of the 50S ribosomal subunit.

It localises to the plastid. The protein resides in the chloroplast. The protein is Large ribosomal subunit protein uL2cz/uL2cy (rpl2-A) of Nasturtium officinale (Watercress).